The sequence spans 216 residues: Pyridoxine/pyridoxamine 5'-phosphate oxidase 1 (216 aa).

Residues 10-13 (RREY) and Lys68 each bind substrate. FMN-binding positions include 63-68 (RIVLLK), 78-79 (YT), Lys85, and Gln107. Positions 125, 129, and 133 each coordinate substrate. FMN is bound by residues 142–143 (QS) and Trp186. Residue 192–194 (RLH) participates in substrate binding. Arg196 provides a ligand contact to FMN.

It belongs to the pyridoxamine 5'-phosphate oxidase family. Homodimer. The cofactor is FMN.

The enzyme catalyses pyridoxamine 5'-phosphate + O2 + H2O = pyridoxal 5'-phosphate + H2O2 + NH4(+). The catalysed reaction is pyridoxine 5'-phosphate + O2 = pyridoxal 5'-phosphate + H2O2. It functions in the pathway cofactor metabolism; pyridoxal 5'-phosphate salvage; pyridoxal 5'-phosphate from pyridoxamine 5'-phosphate: step 1/1. Its pathway is cofactor metabolism; pyridoxal 5'-phosphate salvage; pyridoxal 5'-phosphate from pyridoxine 5'-phosphate: step 1/1. Its function is as follows. Catalyzes the oxidation of either pyridoxine 5'-phosphate (PNP) or pyridoxamine 5'-phosphate (PMP) into pyridoxal 5'-phosphate (PLP). This Hydrogenovibrio crunogenus (strain DSM 25203 / XCL-2) (Thiomicrospira crunogena) protein is Pyridoxine/pyridoxamine 5'-phosphate oxidase 1.